The sequence spans 129 residues: L-ectoine synthase (129 aa).

The protein belongs to the ectoine synthase family.

The enzyme catalyses (2S)-4-acetamido-2-aminobutanoate = L-ectoine + H2O. It participates in amine and polyamine biosynthesis; ectoine biosynthesis; L-ectoine from L-aspartate 4-semialdehyde: step 3/3. Its function is as follows. Catalyzes the circularization of gamma-N-acetyl-alpha,gamma-diaminobutyric acid (ADABA) to ectoine (1,4,5,6-tetrahydro-2-methyl-4-pyrimidine carboxylic acid), which is an excellent osmoprotectant. The sequence is that of L-ectoine synthase from Marinomonas sp. (strain MWYL1).